The primary structure comprises 490 residues: (21S)-21-acetyl-1-hydroxy-apo-melianone synthase CYP88A164 (490 aa).

The helical transmembrane segment at 4–24 (DLLWLILAIVVGTYVVLFGFL) threads the bilayer. Cys-438 is a heme binding site.

It belongs to the cytochrome P450 family. It depends on heme as a cofactor. Mainly expressed in petioles and, to a lower extent, in roots.

The protein localises to the membrane. The catalysed reaction is (21S)-21-acetoxyl-apo-melianone + reduced [NADPH--hemoprotein reductase] + O2 = (21S)-21-acetyl-1-hydroxy-apo-melianone + oxidized [NADPH--hemoprotein reductase] + H2O + H(+). Its pathway is secondary metabolite biosynthesis; terpenoid biosynthesis. In terms of biological role, monooxygenase involved in the biosynthesis of limonoids triterpene natural products such as azadirachtin, an antifeedant widely used as bioinsecticide, and possessing many medicinal applications including anti-tumoral, anti-malarial, anti-rheumatic, antibacterial, anti-inflammatory, anti-pyretic and diuretic effects. Catalyzes the conversion of (21S)-21-acetoxyl-apo-melianone to (21S)-21-acetyl-1-hydroxy-apo-melianone. The chain is (21S)-21-acetyl-1-hydroxy-apo-melianone synthase CYP88A164 from Melia azedarach (Chinaberry tree).